The chain runs to 530 residues: Bifunctional purine biosynthesis protein PurH (530 aa).

The MGS-like domain maps to 1–148 (MNNARPIHRA…KNHKDVAIVV (148 aa)).

Belongs to the PurH family.

The catalysed reaction is (6R)-10-formyltetrahydrofolate + 5-amino-1-(5-phospho-beta-D-ribosyl)imidazole-4-carboxamide = 5-formamido-1-(5-phospho-D-ribosyl)imidazole-4-carboxamide + (6S)-5,6,7,8-tetrahydrofolate. It catalyses the reaction IMP + H2O = 5-formamido-1-(5-phospho-D-ribosyl)imidazole-4-carboxamide. It participates in purine metabolism; IMP biosynthesis via de novo pathway; 5-formamido-1-(5-phospho-D-ribosyl)imidazole-4-carboxamide from 5-amino-1-(5-phospho-D-ribosyl)imidazole-4-carboxamide (10-formyl THF route): step 1/1. Its pathway is purine metabolism; IMP biosynthesis via de novo pathway; IMP from 5-formamido-1-(5-phospho-D-ribosyl)imidazole-4-carboxamide: step 1/1. The protein is Bifunctional purine biosynthesis protein PurH of Vibrio cholerae serotype O1 (strain ATCC 39541 / Classical Ogawa 395 / O395).